The primary structure comprises 95 residues: Aspartyl/glutamyl-tRNA(Asn/Gln) amidotransferase subunit C (95 aa).

It belongs to the GatC family. In terms of assembly, heterotrimer of A, B and C subunits.

It catalyses the reaction L-glutamyl-tRNA(Gln) + L-glutamine + ATP + H2O = L-glutaminyl-tRNA(Gln) + L-glutamate + ADP + phosphate + H(+). It carries out the reaction L-aspartyl-tRNA(Asn) + L-glutamine + ATP + H2O = L-asparaginyl-tRNA(Asn) + L-glutamate + ADP + phosphate + 2 H(+). Its function is as follows. Allows the formation of correctly charged Asn-tRNA(Asn) or Gln-tRNA(Gln) through the transamidation of misacylated Asp-tRNA(Asn) or Glu-tRNA(Gln) in organisms which lack either or both of asparaginyl-tRNA or glutaminyl-tRNA synthetases. The reaction takes place in the presence of glutamine and ATP through an activated phospho-Asp-tRNA(Asn) or phospho-Glu-tRNA(Gln). The sequence is that of Aspartyl/glutamyl-tRNA(Asn/Gln) amidotransferase subunit C from Campylobacter lari (strain RM2100 / D67 / ATCC BAA-1060).